The primary structure comprises 270 residues: L-fucose dehydrogenase (270 aa).

Positions 19, 21, 40, 41, 62, 63, 89, 154, 158, 187, 189, and 191 each coordinate NAD(+).

The protein belongs to the short-chain dehydrogenases/reductases (SDR) family.

The enzyme catalyses L-fucose + NAD(+) = L-fucono-1,5-lactone + NADH + H(+). It catalyses the reaction D-arabinose + NAD(+) = D-arabinono-1,5-lactone + NADH + H(+). It carries out the reaction L-galactose + NAD(+) = L-galactono-1,5-lactone + NADH + H(+). Catalyzes the NAD(+)-dependent oxidation of L-fucose, yielding L-fucono-1,5-lactone, which rapidly converts spontaneously to L-fucone-1,4-lactone. Does not use NADPH. Displays low activity on L-fucose, D-arabinose and L-galactose compared with rabbit and human. This is consitent with the low L-fucose metabolism observed in this species. This is L-fucose dehydrogenase (Hsd17b14) from Rattus norvegicus (Rat).